The primary structure comprises 833 residues: MEEVKKYGKTLEEIEGGLMFDDFPESLVDSDEDHNIFDDEFDAANDETFGGGLDNIGENAELENYATQTAKLRFDDPVWQKPSSSDHVAPSASEIPIPFPNFGNGDASDSFKSSFEAESPFLKKSIWGNGTDGAYNIWGTNFGISSVPAAPTLDLDFGALLPTPTIQATKEVKSSQIPSMPSSALTLEDCERMQMGNKPDSLVDAFKDLQLGSTPVQPQSAQFSKHPLEARIAAPGTPATASSQALPTLPTAALSLEELELQIMKEAQILKGRQQVPSDMREDNKFSHPPPGFNQNVQPRMDPSLSPGGMHGMPPSMGTSMPHMGPMMPPQNMQLPRLPPLNPQFLPLIPVWFNAIINNIQLPMGVPPPPPFLFQLLNHYRNPQLVHAMIMQSSIPPNIRQNGPQFSHPSGPHSPGNRVQRKHSGMPSTRTIYDLALDSFAGYMSYKEREWLIRIQFIQCKGSGDPQVDDYYYVTWRDKQIANGWTAETKLEEATKEKKEKSSESQKDYLERISRMNYREMQKERARERDKERQRERQERIDRGEDKKLRQTLSDKFATSLGLPSKSSTHNPRHVLDMKAQVESVDNQTKKLSDEERKIAVAKKLRTMLLRLEGALNILMEVDELRRSSLPEKSQFKDLSSDEKDQEVEKRTTVIINELMGDDLSKLMQMSKGRAVITRTLKVVEPRDQARIILALMTAGGLVSKKMYGEIVLDILPVVYQKVSNLHPDQFKYLVGALNLDTLKRQLLDSNMFIRDMMMTLFFVSVKNNQQLVEWAKATKFSSLKMPSSAPLSIWRKALSVISDSEIKEFADDIKYSGIVDCHDVAQLIEQSL.

3 disordered regions span residues 279–313, 398–427, and 492–549; these read DMRE…MHGM, NIRQ…SGMP, and EEAT…DKKL. Low complexity predominate over residues 303–313; the sequence is PSLSPGGMHGM. Residues 398-408 are compositionally biased toward polar residues; it reads NIRQNGPQFSH.

It belongs to the PAT1 family.

The protein resides in the cytoplasm. The protein localises to the P-body. Functionally, RNA-binding protein involved in deadenylation-dependent decapping of mRNAs, leading to the degradation of mRNAs. Acts as a scaffold protein that connects deadenylation and decapping machinery. Required for the recruitment of P-body components such as cgh-1 in somatic blastomeres. May play a role in recruiting the decapping enzyme dcap-1 to cytoplasmic puncta in the cell body of the posterior touch receptor neuron, PLM. In Caenorhabditis elegans, this protein is Protein PAT1 homolog 1.